The following is a 198-amino-acid chain: Ribonuclease HII (198 aa).

One can recognise an RNase H type-2 domain in the interval 10 to 198; it reads QLVAGVDEVG…PVKRALGLAS (189 aa). Residues aspartate 16, glutamate 17, and aspartate 108 each coordinate a divalent metal cation.

Belongs to the RNase HII family. Requires Mn(2+) as cofactor. The cofactor is Mg(2+).

Its subcellular location is the cytoplasm. The enzyme catalyses Endonucleolytic cleavage to 5'-phosphomonoester.. Endonuclease that specifically degrades the RNA of RNA-DNA hybrids. This is Ribonuclease HII from Escherichia fergusonii (strain ATCC 35469 / DSM 13698 / CCUG 18766 / IAM 14443 / JCM 21226 / LMG 7866 / NBRC 102419 / NCTC 12128 / CDC 0568-73).